Consider the following 363-residue polypeptide: Ribosomal RNA large subunit methyltransferase M (363 aa).

S-adenosyl-L-methionine-binding positions include Ser190, 223–226 (CPGG), Asp242, Asp262, and Asp279. Lys308 functions as the Proton acceptor in the catalytic mechanism.

Belongs to the class I-like SAM-binding methyltransferase superfamily. RNA methyltransferase RlmE family. RlmM subfamily. Monomer.

The protein localises to the cytoplasm. It catalyses the reaction cytidine(2498) in 23S rRNA + S-adenosyl-L-methionine = 2'-O-methylcytidine(2498) in 23S rRNA + S-adenosyl-L-homocysteine + H(+). Catalyzes the 2'-O-methylation at nucleotide C2498 in 23S rRNA. This chain is Ribosomal RNA large subunit methyltransferase M, found in Vibrio atlanticus (strain LGP32) (Vibrio splendidus (strain Mel32)).